The primary structure comprises 153 residues: Pheromone-binding protein Gp-9 (153 aa).

Residues 1–19 (MKTLILHICIFALVAFASA) form the signal peptide. 3 cysteine pairs are disulfide-bonded: C37–C77, C73–C129, and C118–C138.

Belongs to the PBP/GOBP family. Homodimer.

The protein localises to the secreted. In terms of biological role, colony queen number, a major feature of social organization, is associated with worker genotype for Gp-9. Colonies are headed by either a single reproductive queen (monogyne form) or multiple queens (polygyne form). Differences in worker Gp-9 genotypes between social forms may cause differences in workers' abilities to recognize queens and regulate their numbers. This chain is Pheromone-binding protein Gp-9, found in Solenopsis nigella gensterblumi (Fire ant).